A 484-amino-acid polypeptide reads, in one-letter code: tRNA-2-methylthio-N(6)-dimethylallyladenosine synthase (484 aa).

An MTTase N-terminal domain is found at 36–153 (GKLYIKTHGC…LPELIRARRE (118 aa)). [4Fe-4S] cluster contacts are provided by Cys-45, Cys-82, Cys-116, Cys-190, Cys-194, and Cys-197. In terms of domain architecture, Radical SAM core spans 176–415 (RAEGPSAFVS…HISAHAASIS (240 aa)). The 64-residue stretch at 416-479 (QSMVGSVQRV…SNSLRGRIQL (64 aa)) folds into the TRAM domain. The disordered stretch occupies residues 428–450 (EGPSRRDPNELTGKSENMRPVNF).

Belongs to the methylthiotransferase family. MiaB subfamily. Monomer. The cofactor is [4Fe-4S] cluster.

It localises to the cytoplasm. The catalysed reaction is N(6)-dimethylallyladenosine(37) in tRNA + (sulfur carrier)-SH + AH2 + 2 S-adenosyl-L-methionine = 2-methylsulfanyl-N(6)-dimethylallyladenosine(37) in tRNA + (sulfur carrier)-H + 5'-deoxyadenosine + L-methionine + A + S-adenosyl-L-homocysteine + 2 H(+). Functionally, catalyzes the methylthiolation of N6-(dimethylallyl)adenosine (i(6)A), leading to the formation of 2-methylthio-N6-(dimethylallyl)adenosine (ms(2)i(6)A) at position 37 in tRNAs that read codons beginning with uridine. The polypeptide is tRNA-2-methylthio-N(6)-dimethylallyladenosine synthase (Xanthomonas oryzae pv. oryzae (strain KACC10331 / KXO85)).